Consider the following 277-residue polypeptide: NAD kinase (277 aa).

The active-site Proton acceptor is D67. NAD(+)-binding positions include 67-68 (DG), R72, 137-138 (NE), K148, R165, D167, 178-183 (TGYAMS), L202, and Q236.

The protein belongs to the NAD kinase family. The cofactor is a divalent metal cation.

It is found in the cytoplasm. The enzyme catalyses NAD(+) + ATP = ADP + NADP(+) + H(+). In terms of biological role, involved in the regulation of the intracellular balance of NAD and NADP, and is a key enzyme in the biosynthesis of NADP. Catalyzes specifically the phosphorylation on 2'-hydroxyl of the adenosine moiety of NAD to yield NADP. This is NAD kinase from Pyrococcus furiosus (strain ATCC 43587 / DSM 3638 / JCM 8422 / Vc1).